Consider the following 85-residue polypeptide: uncharacterized protein (85 aa).

This is an uncharacterized protein from Escherichia coli (Bacteriophage T4).